Consider the following 431-residue polypeptide: Transmembrane protease serine 11C (431 aa).

The Cytoplasmic portion of the chain corresponds to M1 to K33. The chain crosses the membrane as a helical; Signal-anchor for type II membrane protein span at residues I34–F54. The Extracellular portion of the chain corresponds to A55–L431. The SEA domain maps to D60–M177. N99 carries N-linked (GlcNAc...) asparagine glycosylation. The Peptidase S1 domain maps to V200–G430. A disulfide bridge connects residues C225 and C241. The active-site Charge relay system is H240. N276 carries an N-linked (GlcNAc...) asparagine glycan. The Charge relay system role is filled by D285. Residue N347 is glycosylated (N-linked (GlcNAc...) asparagine). Disulfide bonds link C350–C366 and C377–C406. S381 functions as the Charge relay system in the catalytic mechanism.

It belongs to the peptidase S1 family. In terms of processing, proteolytically cleaved via an autocatalytic mechanism. Expressed specifically in Purkinje neurons of the cerebellum (at protein level). Also detected in spinal cord.

It is found in the cell membrane. Its subcellular location is the cell projection. It localises to the dendrite. The protein resides in the perikaryon. Its function is as follows. Serine protease which has a preference for Arg or Lys in position P1 and uncharged residues in positions P2 and P3. Shows specificity towards FGF2 in vitro. This Mus musculus (Mouse) protein is Transmembrane protease serine 11C.